A 523-amino-acid polypeptide reads, in one-letter code: Transcription initiation factor TFIID subunit 4 (523 aa).

Disordered regions lie at residues 1–100 (MSLP…AASD) and 185–241 (ASVE…VQGG). The segment covering 58-77 (QMQPPRQPIQQQMQHFQSPS) has biased composition (low complexity). The span at 78-87 (PMAPQGPPGT) shows a compositional bias: pro residues. Residues 101-199 (DKNVTKCVRF…VNPPPGYVFN (99 aa)) form the TAFH domain. The span at 204–213 (PGPPQPPPPQ) shows a compositional bias: pro residues. The span at 214–236 (QQSQQQPPLEMRQIPNPNQIPPQ) shows a compositional bias: low complexity. The histone-fold stretch occupies residues 329 to 383 (LKPDEVLNRITKRMMSSCSVEEEALVAISDAVESHLRELITLMAGVAEHRVESLR). A necessary and sufficient for interaction with oma-1 region spans residues 333–382 (EVLNRITKRMMSSCSVEEEALVAISDAVESHLRELITLMAGVAEHRVESL). Residues 407–435 (QEEELRESREKESLIRMSKNKNSGKETIE) are disordered.

It belongs to the TAF4 family. In terms of assembly, component of the TFIID basal transcription factor complex, composed of TATA-box-binding protein tbp-1, and a number of TBP-associated factors (TAFs). Interacts (via histone-fold domain) with oma-1 (via histone-fold domain). May also interact with oma-2. Interacts (via histone-fold domain) with taf-12 (via the histone-fold domain).

The protein resides in the nucleus. It is found in the cytoplasm. The TFIID basal transcription factor complex plays a major role in the initiation of RNA polymerase II (Pol II)-dependent transcription. TFIID recognizes and binds promoters via its subunit tbp-1, a TATA-box-binding protein, and promotes assembly of the pre-initiation complex (PIC). The TFIID complex consists of tbp-1 and TBP-associated factors (TAFs), including taf-4. Essential for early embryonic development, probably acting via activating transcription initiation by RNA polymerase II, as part of the TFIID complex. In early embryos, but not oocytes, remains, presumably inactive, in the cytoplasm as a result of binding to oma-1. Upon degradation of oma-1, taf-4 is released and bound by taf-12, and the taf-4/12 heterodimer translocates to the nucleus and transcriptional repression is relieved. Involved in lifespan extension in a manner dependent upon mitochondrial function. Plays a role in modulating polyribosome formation. In Caenorhabditis elegans, this protein is Transcription initiation factor TFIID subunit 4.